The sequence spans 701 residues: Polyphosphate kinase (701 aa).

Asn45 lines the ATP pocket. 2 residues coordinate Mg(2+): Arg373 and Arg403. In terms of domain architecture, PLD phosphodiesterase 1 spans 428 to 462; the sequence is PGMKIHAKLLLITRKEGDEFVRYAHIGTGNFHERT. Residue His433 is the Phosphohistidine intermediate of the active site. ATP-binding residues include Tyr466, Arg562, and His590. A PLD phosphodiesterase 2 domain is found at 585-615; sequence DRFLEHPRVLVVHNDGNPQVFISSADWMERN.

It belongs to the polyphosphate kinase 1 (PPK1) family. Mg(2+) serves as cofactor. An intermediate of this reaction is the autophosphorylated ppk in which a phosphate is covalently linked to a histidine residue through a N-P bond.

It carries out the reaction [phosphate](n) + ATP = [phosphate](n+1) + ADP. Functionally, catalyzes the reversible transfer of the terminal phosphate of ATP to form a long-chain polyphosphate (polyP). The protein is Polyphosphate kinase of Vibrio cholerae serotype O1 (strain ATCC 39315 / El Tor Inaba N16961).